The following is a 297-amino-acid chain: 4-hydroxy-tetrahydrodipicolinate synthase (297 aa).

A pyruvate-binding site is contributed by Thr46. Catalysis depends on Tyr134, which acts as the Proton donor/acceptor. The active-site Schiff-base intermediate with substrate is the Lys162. Ile204 contributes to the pyruvate binding site.

This sequence belongs to the DapA family. As to quaternary structure, homotetramer; dimer of dimers.

Its subcellular location is the cytoplasm. It carries out the reaction L-aspartate 4-semialdehyde + pyruvate = (2S,4S)-4-hydroxy-2,3,4,5-tetrahydrodipicolinate + H2O + H(+). The protein operates within amino-acid biosynthesis; L-lysine biosynthesis via DAP pathway; (S)-tetrahydrodipicolinate from L-aspartate: step 3/4. In terms of biological role, catalyzes the condensation of (S)-aspartate-beta-semialdehyde [(S)-ASA] and pyruvate to 4-hydroxy-tetrahydrodipicolinate (HTPA). This Stenotrophomonas maltophilia (strain R551-3) protein is 4-hydroxy-tetrahydrodipicolinate synthase.